The following is a 459-amino-acid chain: MKNISDYRNKKVLVLGLAKSGVNAARLLHKLGALVTVNDKQQFDDNKDAQELLADGMRVITGRHPVELLDEHFELMVKNPGIPYSNPMVKRAEALHMPIITEPELAYQVSEAQWIGITGTNGKTTTTTLIGLMLNQQRPHHAFDAGNIGIPVSQVAQKVGKDDTIVAELSSFQLCGIKTLHPHIAVLTNIYEAHLDWHGNRANYVAAKMRITMNQTPDDYFIMNWDLPEMHELAKQSKAQIVPFSRKNAEGARAQLIDGWLTFDGDRIMKASEMQIPGLHNIENALAAIAAVKLEGVGDDAIREVLRTFSGVKHRIQYLETIDGRRVYNDSKATNVEAATVALNAFDQPIVWLAGGLDRGLPMDALTPLVKKHVKSMVVFGQTAPLMAKIAKDAGVPVQTTENVMTAVPLAYEVSRPGDVILLSPAAASWDQYPNFEVRGDDFIKAVNQLKATVESGDK.

119-125 is a binding site for ATP; the sequence is GTNGKTT.

The protein belongs to the MurCDEF family.

Its subcellular location is the cytoplasm. The catalysed reaction is UDP-N-acetyl-alpha-D-muramoyl-L-alanine + D-glutamate + ATP = UDP-N-acetyl-alpha-D-muramoyl-L-alanyl-D-glutamate + ADP + phosphate + H(+). Its pathway is cell wall biogenesis; peptidoglycan biosynthesis. Cell wall formation. Catalyzes the addition of glutamate to the nucleotide precursor UDP-N-acetylmuramoyl-L-alanine (UMA). This chain is UDP-N-acetylmuramoylalanine--D-glutamate ligase, found in Lacticaseibacillus paracasei (strain ATCC 334 / BCRC 17002 / CCUG 31169 / CIP 107868 / KCTC 3260 / NRRL B-441) (Lactobacillus paracasei).